The primary structure comprises 501 residues: ADP,ATP carrier protein 3 (501 aa).

The next 12 helical transmembrane spans lie at 23 to 43 (LKLF…FGAL), 59 to 79 (IISF…TVLY), 90 to 110 (YIFY…AYII), 146 to 166 (YALM…LMFW), 183 to 203 (PVLG…LVFF), 227 to 247 (IILQ…MFLF), 293 to 313 (IALL…PWKA), 326 to 346 (VNFM…FMII), 361 to 381 (LLTP…IIFI), 383 to 403 (EIGT…VGAI), 446 to 466 (FGKS…PTAT), and 470 to 490 (IIIY…WNII).

Belongs to the ADP/ATP translocase tlc family.

It localises to the cell membrane. Its function is as follows. Provides the rickettsial cell with host ATP in exchange for rickettsial ADP. This is an obligate exchange system. This energy acquiring activity is an important component of rickettsial parasitism. The sequence is that of ADP,ATP carrier protein 3 (tlcC) from Rickettsia typhi (strain ATCC VR-144 / Wilmington).